Reading from the N-terminus, the 313-residue chain is Homoserine O-succinyltransferase (313 aa).

Cysteine 142 acts as the Acyl-thioester intermediate in catalysis. Residues lysine 163 and serine 192 each coordinate substrate. The active-site Proton acceptor is histidine 235. Residue glutamate 237 is part of the active site. Arginine 249 lines the substrate pocket.

Belongs to the MetA family.

It is found in the cytoplasm. It catalyses the reaction L-homoserine + succinyl-CoA = O-succinyl-L-homoserine + CoA. The protein operates within amino-acid biosynthesis; L-methionine biosynthesis via de novo pathway; O-succinyl-L-homoserine from L-homoserine: step 1/1. Functionally, transfers a succinyl group from succinyl-CoA to L-homoserine, forming succinyl-L-homoserine. In Vibrio atlanticus (strain LGP32) (Vibrio splendidus (strain Mel32)), this protein is Homoserine O-succinyltransferase.